We begin with the raw amino-acid sequence, 169 residues long: Crossover junction endodeoxyribonuclease RuvC (169 aa).

Catalysis depends on residues D7, E67, and D139. Mg(2+)-binding residues include D7, E67, and D139.

Belongs to the RuvC family. As to quaternary structure, homodimer which binds Holliday junction (HJ) DNA. The HJ becomes 2-fold symmetrical on binding to RuvC with unstacked arms; it has a different conformation from HJ DNA in complex with RuvA. In the full resolvosome a probable DNA-RuvA(4)-RuvB(12)-RuvC(2) complex forms which resolves the HJ. Mg(2+) is required as a cofactor.

It is found in the cytoplasm. It carries out the reaction Endonucleolytic cleavage at a junction such as a reciprocal single-stranded crossover between two homologous DNA duplexes (Holliday junction).. Its function is as follows. The RuvA-RuvB-RuvC complex processes Holliday junction (HJ) DNA during genetic recombination and DNA repair. Endonuclease that resolves HJ intermediates. Cleaves cruciform DNA by making single-stranded nicks across the HJ at symmetrical positions within the homologous arms, yielding a 5'-phosphate and a 3'-hydroxyl group; requires a central core of homology in the junction. The consensus cleavage sequence is 5'-(A/T)TT(C/G)-3'. Cleavage occurs on the 3'-side of the TT dinucleotide at the point of strand exchange. HJ branch migration catalyzed by RuvA-RuvB allows RuvC to scan DNA until it finds its consensus sequence, where it cleaves and resolves the cruciform DNA. This chain is Crossover junction endodeoxyribonuclease RuvC, found in Rhodospirillum rubrum (strain ATCC 11170 / ATH 1.1.1 / DSM 467 / LMG 4362 / NCIMB 8255 / S1).